A 275-amino-acid chain; its full sequence is Lectin (275 aa).

A signal peptide spans 1-30 (MASLQTQMISFYLIFLSILLTTIFFFKVNS). D-glucose-binding residues include Asp-111 and Gly-129. The Mn(2+) site is built by Glu-149 and Asp-151. Ca(2+)-binding residues include Asp-151, Phe-153, Asn-155, and Asp-159. 2 residues coordinate Mn(2+): Asp-159 and His-166. Positions 211–217 (NSLEEEN) are excised as a propeptide. Gly-246 and Ala-247 together coordinate D-glucose. The propeptide occupies 270–275 (KQAADA).

Belongs to the leguminous lectin family. As to quaternary structure, heterotetramer of two alpha and two beta chains. Post-translationally, the mature form consists of two chains, alpha and beta, produced by cleavage of the immature protein. These remain cleaved, yet fold together to form one subunit.

In terms of biological role, D-mannose specific lectin. The sequence is that of Lectin from Lens culinaris subsp. tomentosus (Lentil).